The following is a 75-amino-acid chain: Small ribosomal subunit protein bS21 (75 aa).

It belongs to the bacterial ribosomal protein bS21 family.

This is Small ribosomal subunit protein bS21 from Brucella abortus (strain S19).